Here is a 137-residue protein sequence, read N- to C-terminus: TSC22 domain family protein 3 (137 aa).

The AP1-binding stretch occupies residues 1-60; the sequence is MNTEMYQTPMEVAVYQLHNFSISFFSSLLGGDVVSVKLDNSASGASVVALDNKIEQAMDL. Asparagine 40 and valine 73 each carry phosphoserine. The leucine-zipper stretch occupies residues 76 to 97; that stretch reads LKEQIRELLEKNSQLERENTLL. Positions 101–137 are disordered; that stretch reads ASPEQLEKFQSRLSPEEPAPEAPETPETPEAPGGSAV. Serine 102 bears the Phosphoserine mark. Threonine 125 and threonine 128 each carry phosphothreonine. Over residues 128–137 the composition is skewed to low complexity; sequence TPEAPGGSAV.

Belongs to the TSC-22/Dip/Bun family. Can form homodimers, however it is likely to function as a monomer. Interacts with NFKB1. Interacts (via N-terminus) with JUN and FOS; these interactions inhibit the binding of active AP1 to its target DNA. In terms of assembly, interacts with MYOD1. Interacts with HDAC1; this interaction affects HDAC1 activity on MYOG promoter and thus inhibits MYOD1 transcriptional activity. As to quaternary structure, interacts with MYOD1. Expressed in T-cells. Expression inversely correlates with T-cell activation, being higher in resting cells and lower in cells activated by TCR/CD3 triggering (at protein level). Constitutively expressed in lung, intestine, kidney and liver, most probably by resident cells from the macrophage lineage. Expressed in thymus, lymph nodes, bone marrow, spleen, lung and skeletal muscle. In terms of tissue distribution, expressed in spleen and skeletal muscle (at protein level). Expressed in the cortex, medulla and papilla of the kidney. As to expression, expressed in the cortex, medulla and papilla of the kidney. Expressed in spleen and skeletal muscle (at protein level).

It is found in the cytoplasm. Its subcellular location is the nucleus. Protects T-cells from IL2 deprivation-induced apoptosis through the inhibition of FOXO3A transcriptional activity that leads to the down-regulation of the pro-apoptotic factor BCL2L11. In macrophages, plays a role in the anti-inflammatory and immunosuppressive effects of glucocorticoids and IL10. In T-cells, inhibits anti-CD3-induced NFKB1 nuclear translocation and thereby NFKB1 DNA-binding activities. In vitro, suppresses AP-1 transcription factor complex DNA-binding activities. Functionally, inhibits myogenic differentiation and mediates anti-myogenic effects of glucocorticoids by binding and regulating MYOD1 and HDAC1 transcriptional activity resulting in reduced expression of MYOG. The sequence is that of TSC22 domain family protein 3 from Mus musculus (Mouse).